We begin with the raw amino-acid sequence, 321 residues long: Phospho-N-acetylmuramoyl-pentapeptide-transferase (321 aa).

10 helical membrane-spanning segments follow: residues 1 to 21 (MIFI…PILI), 50 to 70 (MGGL…IIFV), 76 to 96 (IILL…DDYI), 112 to 132 (FLAQ…FHLV), 140 to 160 (IPFV…IVFW), 176 to 196 (GLAT…SYML), 200 to 220 (AIGI…PYNL), 225 to 245 (VFMG…ISIM), 250 to 270 (LSLI…MLQV), and 300 to 320 (VVTV…WIGV).

Belongs to the glycosyltransferase 4 family. MraY subfamily. Mg(2+) is required as a cofactor.

The protein localises to the cell membrane. The enzyme catalyses UDP-N-acetyl-alpha-D-muramoyl-L-alanyl-gamma-D-glutamyl-L-lysyl-D-alanyl-D-alanine + di-trans,octa-cis-undecaprenyl phosphate = Mur2Ac(oyl-L-Ala-gamma-D-Glu-L-Lys-D-Ala-D-Ala)-di-trans,octa-cis-undecaprenyl diphosphate + UMP. It participates in cell wall biogenesis; peptidoglycan biosynthesis. Catalyzes the initial step of the lipid cycle reactions in the biosynthesis of the cell wall peptidoglycan: transfers peptidoglycan precursor phospho-MurNAc-pentapeptide from UDP-MurNAc-pentapeptide onto the lipid carrier undecaprenyl phosphate, yielding undecaprenyl-pyrophosphoryl-MurNAc-pentapeptide, known as lipid I. In Staphylococcus epidermidis (strain ATCC 12228 / FDA PCI 1200), this protein is Phospho-N-acetylmuramoyl-pentapeptide-transferase.